Reading from the N-terminus, the 141-residue chain is HTH-type transcriptional regulator ZntR (141 aa).

In terms of domain architecture, HTH merR-type spans 1–70; that stretch reads MYRIGELAKM…LESIRELLSI (70 aa). Positions 4-23 form a DNA-binding region, H-T-H motif; that stretch reads IGELAKMAEVTPDTIRYYEK. The Zn(2+) site is built by Cys-114, Cys-115, His-119, and Cys-124.

In terms of assembly, homodimer.

Functionally, zinc-responsive transcriptional regulator of zntA. The sequence is that of HTH-type transcriptional regulator ZntR (zntR) from Escherichia coli O157:H7.